A 65-amino-acid chain; its full sequence is Large ribosomal subunit protein bL35 (65 aa).

The protein belongs to the bacterial ribosomal protein bL35 family.

This Acaryochloris marina (strain MBIC 11017) protein is Large ribosomal subunit protein bL35.